We begin with the raw amino-acid sequence, 311 residues long: Methionyl-tRNA formyltransferase (311 aa).

108–111 provides a ligand contact to (6S)-5,6,7,8-tetrahydrofolate; the sequence is SILP.

The protein belongs to the Fmt family.

The enzyme catalyses L-methionyl-tRNA(fMet) + (6R)-10-formyltetrahydrofolate = N-formyl-L-methionyl-tRNA(fMet) + (6S)-5,6,7,8-tetrahydrofolate + H(+). Functionally, attaches a formyl group to the free amino group of methionyl-tRNA(fMet). The formyl group appears to play a dual role in the initiator identity of N-formylmethionyl-tRNA by promoting its recognition by IF2 and preventing the misappropriation of this tRNA by the elongation apparatus. In Sorangium cellulosum (strain So ce56) (Polyangium cellulosum (strain So ce56)), this protein is Methionyl-tRNA formyltransferase.